The following is a 114-amino-acid chain: Large ribosomal subunit protein bL20 (114 aa).

It belongs to the bacterial ribosomal protein bL20 family.

Its function is as follows. Binds directly to 23S ribosomal RNA and is necessary for the in vitro assembly process of the 50S ribosomal subunit. It is not involved in the protein synthesizing functions of that subunit. This is Large ribosomal subunit protein bL20 from Anaeromyxobacter sp. (strain Fw109-5).